Consider the following 239-residue polypeptide: Sugar fermentation stimulation protein homolog (239 aa).

This sequence belongs to the SfsA family.

The polypeptide is Sugar fermentation stimulation protein homolog (Maridesulfovibrio salexigens (strain ATCC 14822 / DSM 2638 / NCIMB 8403 / VKM B-1763) (Desulfovibrio salexigens)).